The chain runs to 100 residues: NADH-quinone oxidoreductase subunit K 2 (100 aa).

3 consecutive transmembrane segments (helical) span residues 2–22 (LAIENYLILSAILFSIGTIGV), 29–49 (IVIFMCIEMMLNAVNLTFIAF), and 61–81 (FVFFVMTVAAAEAAVGLALMI).

The protein belongs to the complex I subunit 4L family. NDH-1 is composed of 14 different subunits. Subunits NuoA, H, J, K, L, M, N constitute the membrane sector of the complex.

The protein resides in the cell inner membrane. The catalysed reaction is a quinone + NADH + 5 H(+)(in) = a quinol + NAD(+) + 4 H(+)(out). In terms of biological role, NDH-1 shuttles electrons from NADH, via FMN and iron-sulfur (Fe-S) centers, to quinones in the respiratory chain. The immediate electron acceptor for the enzyme in this species is believed to be ubiquinone. Couples the redox reaction to proton translocation (for every two electrons transferred, four hydrogen ions are translocated across the cytoplasmic membrane), and thus conserves the redox energy in a proton gradient. This is NADH-quinone oxidoreductase subunit K 2 from Citrifermentans bemidjiense (strain ATCC BAA-1014 / DSM 16622 / JCM 12645 / Bem) (Geobacter bemidjiensis).